The chain runs to 165 residues: Chorismate pyruvate-lyase (165 aa).

Positions 35, 77, 115, and 156 each coordinate substrate.

Belongs to the UbiC family. Monomer.

It is found in the cytoplasm. It catalyses the reaction chorismate = 4-hydroxybenzoate + pyruvate. It functions in the pathway cofactor biosynthesis; ubiquinone biosynthesis. Removes the pyruvyl group from chorismate, with concomitant aromatization of the ring, to provide 4-hydroxybenzoate (4HB) for the ubiquinone pathway. In Salmonella agona (strain SL483), this protein is Chorismate pyruvate-lyase.